The chain runs to 372 residues: N-methyl-L-tryptophan oxidase (372 aa).

4–34 provides a ligand contact to FAD; that stretch reads DLIIIGSGSVGAAAGYYATRAGLNVLMTDAH. S-8alpha-FAD cysteine is present on C308.

Belongs to the MSOX/MTOX family. MTOX subfamily. In terms of assembly, monomer. FAD is required as a cofactor.

The catalysed reaction is N(alpha)-methyl-L-tryptophan + O2 + H2O = L-tryptophan + formaldehyde + H2O2. Catalyzes the oxidative demethylation of N-methyl-L-tryptophan. The polypeptide is N-methyl-L-tryptophan oxidase (Escherichia coli O157:H7).